The primary structure comprises 245 residues: 3-deoxy-manno-octulosonate cytidylyltransferase (245 aa).

Belongs to the KdsB family.

The protein resides in the cytoplasm. It carries out the reaction 3-deoxy-alpha-D-manno-oct-2-ulosonate + CTP = CMP-3-deoxy-beta-D-manno-octulosonate + diphosphate. It functions in the pathway nucleotide-sugar biosynthesis; CMP-3-deoxy-D-manno-octulosonate biosynthesis; CMP-3-deoxy-D-manno-octulosonate from 3-deoxy-D-manno-octulosonate and CTP: step 1/1. The protein operates within bacterial outer membrane biogenesis; lipopolysaccharide biosynthesis. Activates KDO (a required 8-carbon sugar) for incorporation into bacterial lipopolysaccharide in Gram-negative bacteria. The chain is 3-deoxy-manno-octulosonate cytidylyltransferase from Acaryochloris marina (strain MBIC 11017).